The following is a 784-amino-acid chain: Armadillo repeat-containing X-linked protein 2 (784 aa).

The Mitochondrial intermembrane portion of the chain corresponds to 1-6 (MSRARD). Mitochondrion outer membrane (MOM)-targeting sequence stretches follow at residues 1-6 (MSRARD) and 26-40 (KYTR…RLTK). Residues 7-27 (AGCVAAGIVIGASAWYCVYKY) form a helical; Signal-anchor membrane-spanning segment. At 28 to 784 (TRGKDQKKKR…VKVIKLVNKF (757 aa)) the chain is on the cytoplasmic side. Disordered stretches follow at residues 328-353 (TSGG…RTAS), 388-461 (HSGA…ELGM), and 488-522 (PESE…TIPM). Low complexity predominate over residues 396–418 (GTSGSSKTAATGKKAAPGAHTGA). The segment covering 488 to 508 (PESEEGESGWTDTESDSDSEP) has biased composition (acidic residues). 3 ARM repeats span residues 528–568 (PYEI…NNAN), 570–609 (SCNQ…NLSE), and 650–689 (ITND…NFAE).

This sequence belongs to the eutherian X-chromosome-specific Armcx family. Widely expressed in the adult nervous tissue, especially in the forebrain, including the cerebral cortex, hippocampus and thalamus.

The protein resides in the mitochondrion. It localises to the mitochondrion outer membrane. Functionally, may regulate the dynamics and distribution of mitochondria in neural cells. The polypeptide is Armadillo repeat-containing X-linked protein 2 (Armcx2) (Mus musculus (Mouse)).